The chain runs to 355 residues: Phosphoserine aminotransferase (355 aa).

L-glutamate is bound at residue Arg41. Residues 75–76 (AS), Trp99, Thr147, Asp166, and Gln189 each bind pyridoxal 5'-phosphate. Lys190 is modified (N6-(pyridoxal phosphate)lysine). Residue 231 to 232 (NT) participates in pyridoxal 5'-phosphate binding.

This sequence belongs to the class-V pyridoxal-phosphate-dependent aminotransferase family. SerC subfamily. As to quaternary structure, homodimer. The cofactor is pyridoxal 5'-phosphate.

Its subcellular location is the cytoplasm. It catalyses the reaction O-phospho-L-serine + 2-oxoglutarate = 3-phosphooxypyruvate + L-glutamate. The catalysed reaction is 4-(phosphooxy)-L-threonine + 2-oxoglutarate = (R)-3-hydroxy-2-oxo-4-phosphooxybutanoate + L-glutamate. Its pathway is amino-acid biosynthesis; L-serine biosynthesis; L-serine from 3-phospho-D-glycerate: step 2/3. The protein operates within cofactor biosynthesis; pyridoxine 5'-phosphate biosynthesis; pyridoxine 5'-phosphate from D-erythrose 4-phosphate: step 3/5. In terms of biological role, catalyzes the reversible conversion of 3-phosphohydroxypyruvate to phosphoserine and of 3-hydroxy-2-oxo-4-phosphonooxybutanoate to phosphohydroxythreonine. The protein is Phosphoserine aminotransferase of Parabacteroides distasonis (strain ATCC 8503 / DSM 20701 / CIP 104284 / JCM 5825 / NCTC 11152).